Reading from the N-terminus, the 254-residue chain is Triosephosphate isomerase (254 aa).

Residue 10–12 participates in substrate binding; it reads NWK. Catalysis depends on histidine 99, which acts as the Electrophile. Glutamate 169 serves as the catalytic Proton acceptor. Substrate-binding positions include glycine 175, serine 215, and 236-237; that span reads GG.

This sequence belongs to the triosephosphate isomerase family. Homodimer.

It is found in the cytoplasm. The enzyme catalyses D-glyceraldehyde 3-phosphate = dihydroxyacetone phosphate. The protein operates within carbohydrate biosynthesis; gluconeogenesis. Its pathway is carbohydrate degradation; glycolysis; D-glyceraldehyde 3-phosphate from glycerone phosphate: step 1/1. Involved in the gluconeogenesis. Catalyzes stereospecifically the conversion of dihydroxyacetone phosphate (DHAP) to D-glyceraldehyde-3-phosphate (G3P). In Chlamydia abortus (strain DSM 27085 / S26/3) (Chlamydophila abortus), this protein is Triosephosphate isomerase.